A 792-amino-acid chain; its full sequence is Kinesin-like protein KIFC2 (792 aa).

2 disordered regions span residues Ala22 to Pro45 and Gln142 to Gln184. Over residues Gln142–Thr169 the composition is skewed to polar residues. The stretch at Leu186–Cys347 forms a coiled coil. The Kinesin motor domain occupies Asn409–Val732. Gly486–Thr493 contacts ATP. A disordered region spans residues Leu734–Pro792. Residues Arg744–Pro764 show a composition bias toward low complexity. The span at Thr765–Thr774 shows a compositional bias: pro residues.

This sequence belongs to the TRAFAC class myosin-kinesin ATPase superfamily. Kinesin family. In terms of tissue distribution, present in axons and dendrites of neurons in the central and peripheral nervous systems.

The protein localises to the cytoplasm. The protein resides in the cytoskeleton. Its function is as follows. May play a role in microtubule-dependent retrograde axonal transport. May function as the motor for the transport of multivesicular body (MVB)-like organelles in dendrites. The protein is Kinesin-like protein KIFC2 (Kifc2) of Mus musculus (Mouse).